The sequence spans 73 residues: Beta-defensin 40 (73 aa).

Positions 1–23 are cleaved as a signal peptide; it reads MKISCFLLMIFFLSCFQINPVAV. 3 disulfides stabilise this stretch: C29–C58, C36–C51, and C41–C59.

This sequence belongs to the beta-defensin family. As to expression, only expressed in epididymis (corpus, cauda and caput).

It localises to the secreted. In terms of biological role, has antibacterial activity. The chain is Beta-defensin 40 (Defb40) from Mus musculus (Mouse).